A 336-amino-acid polypeptide reads, in one-letter code: Ketol-acid reductoisomerase (NADP(+)) (336 aa).

The KARI N-terminal Rossmann domain maps to 3 to 183; sequence ATMYYDRDVS…GGTRAGVLET (181 aa). Residues 26–29, Arg-49, Ser-52, Ser-54, and 84–87 each bind NADP(+); these read YGSQ and DETQ. His-109 is a catalytic residue. Gly-135 is an NADP(+) binding site. The region spanning 184 to 329 is the KARI C-terminal knotted domain; sequence TFKEETETDL…RELRSKMPFI (146 aa). Mg(2+) contacts are provided by Asp-192, Glu-196, Glu-228, and Glu-232. Ser-253 provides a ligand contact to substrate.

The protein belongs to the ketol-acid reductoisomerase family. The cofactor is Mg(2+).

The enzyme catalyses (2R)-2,3-dihydroxy-3-methylbutanoate + NADP(+) = (2S)-2-acetolactate + NADPH + H(+). It carries out the reaction (2R,3R)-2,3-dihydroxy-3-methylpentanoate + NADP(+) = (S)-2-ethyl-2-hydroxy-3-oxobutanoate + NADPH + H(+). It participates in amino-acid biosynthesis; L-isoleucine biosynthesis; L-isoleucine from 2-oxobutanoate: step 2/4. Its pathway is amino-acid biosynthesis; L-valine biosynthesis; L-valine from pyruvate: step 2/4. Involved in the biosynthesis of branched-chain amino acids (BCAA). Catalyzes an alkyl-migration followed by a ketol-acid reduction of (S)-2-acetolactate (S2AL) to yield (R)-2,3-dihydroxy-isovalerate. In the isomerase reaction, S2AL is rearranged via a Mg-dependent methyl migration to produce 3-hydroxy-3-methyl-2-ketobutyrate (HMKB). In the reductase reaction, this 2-ketoacid undergoes a metal-dependent reduction by NADPH to yield (R)-2,3-dihydroxy-isovalerate. The polypeptide is Ketol-acid reductoisomerase (NADP(+)) (Deinococcus geothermalis (strain DSM 11300 / CIP 105573 / AG-3a)).